The following is a 564-amino-acid chain: Proline--tRNA ligase (564 aa).

Belongs to the class-II aminoacyl-tRNA synthetase family. ProS type 1 subfamily. In terms of assembly, homodimer.

The protein resides in the cytoplasm. The catalysed reaction is tRNA(Pro) + L-proline + ATP = L-prolyl-tRNA(Pro) + AMP + diphosphate. Its function is as follows. Catalyzes the attachment of proline to tRNA(Pro) in a two-step reaction: proline is first activated by ATP to form Pro-AMP and then transferred to the acceptor end of tRNA(Pro). As ProRS can inadvertently accommodate and process non-cognate amino acids such as alanine and cysteine, to avoid such errors it has two additional distinct editing activities against alanine. One activity is designated as 'pretransfer' editing and involves the tRNA(Pro)-independent hydrolysis of activated Ala-AMP. The other activity is designated 'posttransfer' editing and involves deacylation of mischarged Ala-tRNA(Pro). The misacylated Cys-tRNA(Pro) is not edited by ProRS. This Sulfurihydrogenibium sp. (strain YO3AOP1) protein is Proline--tRNA ligase.